A 995-amino-acid chain; its full sequence is Aconitate hydratase 2, mitochondrial (995 aa).

The transit peptide at M1–N83 directs the protein to the mitochondrion. Substrate is bound by residues Q187 and D306–H308. Residues C538, C604, and C607 each coordinate [4Fe-4S] cluster. Residues R637, R642, R800, and S881–R882 contribute to the substrate site.

It belongs to the aconitase/IPM isomerase family. In terms of assembly, monomer. The cofactor is [4Fe-4S] cluster. As to expression, mostly expressed in roots, leaves and flowers, also present in stems, and, at low levels, in seeds.

The protein localises to the mitochondrion. It carries out the reaction citrate = D-threo-isocitrate. It functions in the pathway carbohydrate metabolism; tricarboxylic acid cycle; isocitrate from oxaloacetate: step 2/2. In terms of biological role, catalyzes the isomerization of citrate to isocitrate via cis-aconitate. Contributes to oxidative stress tolerance. Involved in acetate assimilation. This is Aconitate hydratase 2, mitochondrial from Arabidopsis thaliana (Mouse-ear cress).